The following is a 348-amino-acid chain: Dihydroorotase (348 aa).

Zn(2+) contacts are provided by H14 and H16. Residues 16 to 18 (HLR) and N42 contribute to the substrate site. Zn(2+)-binding residues include K100, H137, and H175. An N6-carboxylysine modification is found at K100. H137 is a substrate binding site. L220 is a substrate binding site. Position 248 (D248) interacts with Zn(2+). Residue D248 is part of the active site. Residues H252 and A264 each coordinate substrate.

This sequence belongs to the metallo-dependent hydrolases superfamily. DHOase family. Class II DHOase subfamily. Homodimer. It depends on Zn(2+) as a cofactor.

The enzyme catalyses (S)-dihydroorotate + H2O = N-carbamoyl-L-aspartate + H(+). Its pathway is pyrimidine metabolism; UMP biosynthesis via de novo pathway; (S)-dihydroorotate from bicarbonate: step 3/3. Its function is as follows. Catalyzes the reversible cyclization of carbamoyl aspartate to dihydroorotate. This is Dihydroorotase from Pseudomonas fluorescens (strain Pf0-1).